The primary structure comprises 122 residues: Serum amyloid A-1 protein (122 aa).

The first 19 residues, 1 to 19 (MKLLSGLLLCSLVLGVSSQ), serve as a signal peptide directing secretion. The tract at residues 20 to 45 (RWFSFIGEATQGAWDMWRAYSDMREA) is important for amyloid formation. The tract at residues 87–122 (MGHGAEDSMADQAANEWGRSGKDPNHFRPKGLPDKY) is disordered. The segment covering 105–122 (RSGKDPNHFRPKGLPDKY) has biased composition (basic and acidic residues).

The protein belongs to the SAA family. Homohexamer; dimer of trimers. Can form amyloid fibrils after partial proteolysis; the native, undenatured protein does not form amyloid fibrils (in vitro). Apolipoprotein of the HDL complex. Binds to heparin. Detected in liver.

The protein resides in the secreted. Its function is as follows. Major acute phase protein. The sequence is that of Serum amyloid A-1 protein (SAA1) from Oryctolagus cuniculus (Rabbit).